The sequence spans 120 residues: Large ribosomal subunit protein uL18 (120 aa).

The protein belongs to the universal ribosomal protein uL18 family. Part of the 50S ribosomal subunit; part of the 5S rRNA/L5/L18/L25 subcomplex. Contacts the 5S and 23S rRNAs.

Its function is as follows. This is one of the proteins that bind and probably mediate the attachment of the 5S RNA into the large ribosomal subunit, where it forms part of the central protuberance. This is Large ribosomal subunit protein uL18 from Brevibacillus brevis (strain 47 / JCM 6285 / NBRC 100599).